A 424-amino-acid polypeptide reads, in one-letter code: Anaerobic glycerol-3-phosphate dehydrogenase subunit B (424 aa).

This sequence belongs to the anaerobic G-3-P dehydrogenase subunit B family. As to quaternary structure, composed of a catalytic GlpA/B dimer and of membrane bound GlpC. FMN serves as cofactor.

The enzyme catalyses a quinone + sn-glycerol 3-phosphate = dihydroxyacetone phosphate + a quinol. The protein operates within polyol metabolism; glycerol degradation via glycerol kinase pathway; glycerone phosphate from sn-glycerol 3-phosphate (anaerobic route): step 1/1. Conversion of glycerol 3-phosphate to dihydroxyacetone. Uses fumarate or nitrate as electron acceptor. The protein is Anaerobic glycerol-3-phosphate dehydrogenase subunit B of Yersinia pestis bv. Antiqua (strain Antiqua).